The primary structure comprises 255 residues: Ribosomal RNA small subunit methyltransferase A (255 aa).

Positions 12, 14, 39, 60, 84, and 102 each coordinate S-adenosyl-L-methionine.

The protein belongs to the class I-like SAM-binding methyltransferase superfamily. rRNA adenine N(6)-methyltransferase family. RsmA subfamily.

The protein localises to the cytoplasm. It carries out the reaction adenosine(1518)/adenosine(1519) in 16S rRNA + 4 S-adenosyl-L-methionine = N(6)-dimethyladenosine(1518)/N(6)-dimethyladenosine(1519) in 16S rRNA + 4 S-adenosyl-L-homocysteine + 4 H(+). In terms of biological role, specifically dimethylates two adjacent adenosines (A1518 and A1519) in the loop of a conserved hairpin near the 3'-end of 16S rRNA in the 30S particle. May play a critical role in biogenesis of 30S subunits. The polypeptide is Ribosomal RNA small subunit methyltransferase A (Methylobacillus flagellatus (strain ATCC 51484 / DSM 6875 / VKM B-1610 / KT)).